A 286-amino-acid chain; its full sequence is Phosphate import ATP-binding protein PstB (286 aa).

The ABC transporter domain occupies 40–281 (IAVRNLDFYY…PREQRTQEYI (242 aa)). 72-79 (GPSGCGKS) is an ATP binding site.

Belongs to the ABC transporter superfamily. Phosphate importer (TC 3.A.1.7) family. As to quaternary structure, the complex is composed of two ATP-binding proteins (PstB), two transmembrane proteins (PstC and PstA) and a solute-binding protein (PstS).

Its subcellular location is the cell inner membrane. It carries out the reaction phosphate(out) + ATP + H2O = ADP + 2 phosphate(in) + H(+). In terms of biological role, part of the ABC transporter complex PstSACB involved in phosphate import. Responsible for energy coupling to the transport system. This Granulibacter bethesdensis (strain ATCC BAA-1260 / CGDNIH1) protein is Phosphate import ATP-binding protein PstB.